A 260-amino-acid polypeptide reads, in one-letter code: uncharacterized protein (260 aa).

This is an uncharacterized protein from Bacillus subtilis (strain 168).